The chain runs to 343 residues: tRNA N6-adenosine threonylcarbamoyltransferase (343 aa).

Fe cation-binding residues include His114 and His118. Substrate contacts are provided by residues Leu137–Gly141, Asp171, Gly184, Asp188, and Asn278. Asp306 contributes to the Fe cation binding site.

Belongs to the KAE1 / TsaD family. It depends on Fe(2+) as a cofactor.

It is found in the cytoplasm. The catalysed reaction is L-threonylcarbamoyladenylate + adenosine(37) in tRNA = N(6)-L-threonylcarbamoyladenosine(37) in tRNA + AMP + H(+). Functionally, required for the formation of a threonylcarbamoyl group on adenosine at position 37 (t(6)A37) in tRNAs that read codons beginning with adenine. Is involved in the transfer of the threonylcarbamoyl moiety of threonylcarbamoyl-AMP (TC-AMP) to the N6 group of A37, together with TsaE and TsaB. TsaD likely plays a direct catalytic role in this reaction. This Acidothermus cellulolyticus (strain ATCC 43068 / DSM 8971 / 11B) protein is tRNA N6-adenosine threonylcarbamoyltransferase.